The primary structure comprises 405 residues: uncharacterized protein (405 aa).

The next 12 membrane-spanning stretches (helical) occupy residues 19–39, 47–67, 85–105, 129–149, 157–177, 178–198, 224–244, 252–272, 283–303, 309–329, 344–364, and 366–386; these read ILSI…PLAV, VMGF…FATL, IVVF…TAGL, SFAG…LHIG, IVTY…YHWG, GLQA…LLAI, GMAL…ITLF, GAAF…LLFP, VAMI…VATM, IGVL…GVVA, TYTV…GLVM, and WAGV…ALLL.

The protein belongs to the major facilitator superfamily. YhhS family.

It is found in the cell inner membrane. This is an uncharacterized protein from Escherichia coli O157:H7.